A 487-amino-acid polypeptide reads, in one-letter code: UPF0324 membrane protein NE0724 (487 aa).

Transmembrane regions (helical) follow at residues Trp-19–Trp-38, Pro-71–Met-93, Phe-100–Asn-119, Leu-139–Phe-161, Ala-181–Ile-200, Val-204–Gly-226, Val-269–Ile-291, Ile-350–Tyr-369, Phe-389–Ser-411, Gly-426–Ile-443, and Ala-456–Phe-478.

This sequence belongs to the UPF0324 family.

Its subcellular location is the cell membrane. This is UPF0324 membrane protein NE0724 from Nitrosomonas europaea (strain ATCC 19718 / CIP 103999 / KCTC 2705 / NBRC 14298).